We begin with the raw amino-acid sequence, 99 residues long: Ferredoxin-2 (99 aa).

Residues 4 to 96 (YQVRLINKKR…DCTIRTHQEA (93 aa)) form the 2Fe-2S ferredoxin-type domain. Cysteine 42, cysteine 47, cysteine 50, and cysteine 80 together coordinate [2Fe-2S] cluster.

This sequence belongs to the 2Fe2S plant-type ferredoxin family. [2Fe-2S] cluster is required as a cofactor.

In terms of biological role, ferredoxins are iron-sulfur proteins that transfer electrons in a wide variety of metabolic reactions. Donates electrons to the nitrogenase. The polypeptide is Ferredoxin-2 (fdxH) (Leptolyngbya boryana (Plectonema boryanum)).